A 56-amino-acid chain; its full sequence is Large ribosomal subunit protein bL32c (56 aa).

The segment covering 1–20 has biased composition (basic residues); the sequence is MAAPKKRTSKSRKNMRKSTW. The interval 1-28 is disordered; that stretch reads MAAPKKRTSKSRKNMRKSTWKRQAATQA.

The protein belongs to the bacterial ribosomal protein bL32 family.

It localises to the plastid. The protein localises to the chloroplast. The polypeptide is Large ribosomal subunit protein bL32c (rpl32) (Mesostigma viride (Green alga)).